Consider the following 363-residue polypeptide: Fructose-bisphosphate aldolase C (363 aa).

Tyr-5 is subject to Phosphotyrosine. Ser-36, Ser-39, and Ser-45 each carry phosphoserine. Arg-56 lines the substrate pocket. Lys-111 bears the N6-acetyllysine mark. Residue Lys-147 coordinates substrate. The active-site Proton acceptor is the Glu-188. Catalysis depends on Lys-230, which acts as the Schiff-base intermediate with dihydroxyacetone-P.

It belongs to the class I fructose-bisphosphate aldolase family. Homotetramer. Interacts with ATP6V1E1. Expressed exclusively in Purkinje cells in bands running from anterior to posterior across most of the cerebellum. Expressed at higher levels in the brains of BSE-infected animals.

It catalyses the reaction beta-D-fructose 1,6-bisphosphate = D-glyceraldehyde 3-phosphate + dihydroxyacetone phosphate. The protein operates within carbohydrate degradation; glycolysis; D-glyceraldehyde 3-phosphate and glycerone phosphate from D-glucose: step 4/4. The protein is Fructose-bisphosphate aldolase C (Aldoc) of Mus musculus (Mouse).